The primary structure comprises 337 residues: 1-aminocyclopropane-1-carboxylate deaminase (337 aa).

Residue lysine 50 is modified to N6-(pyridoxal phosphate)lysine. Serine 77 functions as the Nucleophile in the catalytic mechanism.

It belongs to the ACC deaminase/D-cysteine desulfhydrase family. Homotrimer. Requires pyridoxal 5'-phosphate as cofactor.

It carries out the reaction 1-aminocyclopropane-1-carboxylate + H2O = 2-oxobutanoate + NH4(+). Its function is as follows. Catalyzes a cyclopropane ring-opening reaction, the irreversible conversion of 1-aminocyclopropane-1-carboxylate (ACC) to ammonia and alpha-ketobutyrate. Allows growth on ACC as a nitrogen source. The chain is 1-aminocyclopropane-1-carboxylate deaminase from Methylobacterium nodulans (strain LMG 21967 / CNCM I-2342 / ORS 2060).